The primary structure comprises 404 residues: Putative arginine deiminase (404 aa).

Cys-394 functions as the Amidino-cysteine intermediate in the catalytic mechanism.

The protein belongs to the arginine deiminase family.

The protein resides in the cytoplasm. The catalysed reaction is L-arginine + H2O = L-citrulline + NH4(+). It functions in the pathway amino-acid degradation; L-arginine degradation via ADI pathway; carbamoyl phosphate from L-arginine: step 1/2. This Mycoplasma pneumoniae (strain ATCC 29342 / M129 / Subtype 1) (Mycoplasmoides pneumoniae) protein is Putative arginine deiminase (arcA).